The chain runs to 1082 residues: Protein argonaute 1A (1082 aa).

Disordered regions lie at residues 17-148 (MMRK…ASQD) and 187-208 (GQSPTSQAIQPAPPSSKSVRFP). The span at 29–38 (GESSGTQQAT) shows a compositional bias: polar residues. The span at 72–100 (GRGGGQHQGRGGRYQGRGGPTSHQPGGGP) shows a compositional bias: gly residues. Residues 420–533 (PVIDFVAQLL…LPMEVCKIVE (114 aa)) form the PAZ domain. Residues 709-1030 (LLIAILPDNN…AAFRARFYME (322 aa)) form the Piwi domain. The interval 1036 to 1065 (SGSMASGAHTRGGGPLPGARSTKPAGNVAV) is disordered.

This sequence belongs to the argonaute family. Ago subfamily.

In terms of biological role, probably involved in the RNA silencing pathway. May bind to short RNAs such as microRNAs (miRNAs) or short interfering RNAs (siRNAs), and represses the translation of mRNAs which are complementary to them. In Oryza sativa subsp. japonica (Rice), this protein is Protein argonaute 1A (AGO1A).